We begin with the raw amino-acid sequence, 253 residues long: Cyclin-C1-2 (253 aa).

The protein belongs to the cyclin family. Cyclin C subfamily.

The sequence is that of Cyclin-C1-2 (CYCC1-2) from Arabidopsis thaliana (Mouse-ear cress).